We begin with the raw amino-acid sequence, 308 residues long: MPADDDDASYLLCAEDAGAAVFDVAVDISTCTTEDDECCSVGGEELYSAASIAELIGGEAEYSPRSDYPDRLRSRSIDPAARAESVSWILKVQEYNGFLPLTAYLAVNYMDRFLSLRHLPEGQGWAMQLLAVACLSLAAKMEETLVPSLLDLQVECSRYVFEPRTICRMEFLILTALNWRLRSVTPFTFIDFFACKHISNAMVQNANSDIQFLDHCPSSMAAAAVLCATGETPSLAFVNPELAVNWCIGLAEEGISSCYQLMQQLVIGNVQRSAAAAAAVNLFSDEGLSYDSSSPPPPKRRKRSPPGT.

The disordered stretch occupies residues 286-308; the sequence is EGLSYDSSSPPPPKRRKRSPPGT. Basic residues predominate over residues 298–308; sequence PKRRKRSPPGT.

This sequence belongs to the cyclin family. Cyclin D subfamily.

This chain is Cyclin-D2-1 (CYCD2-1), found in Oryza sativa subsp. japonica (Rice).